A 336-amino-acid chain; its full sequence is DNA-directed RNA polymerase subunit alpha (336 aa).

The alpha N-terminal domain (alpha-NTD) stretch occupies residues 1-234 (MIEFVIPKKL…NHFKIVTEGL (234 aa)). Residues 269 to 336 (VYNRKIDELE…KFGLELRKGE (68 aa)) form an alpha C-terminal domain (alpha-CTD) region.

The protein belongs to the RNA polymerase alpha chain family. Homodimer. The RNAP catalytic core consists of 2 alpha, 1 beta, 1 beta' and 1 omega subunit. When a sigma factor is associated with the core the holoenzyme is formed, which can initiate transcription.

The enzyme catalyses RNA(n) + a ribonucleoside 5'-triphosphate = RNA(n+1) + diphosphate. Functionally, DNA-dependent RNA polymerase catalyzes the transcription of DNA into RNA using the four ribonucleoside triphosphates as substrates. This Thermotoga petrophila (strain ATCC BAA-488 / DSM 13995 / JCM 10881 / RKU-1) protein is DNA-directed RNA polymerase subunit alpha.